A 110-amino-acid polypeptide reads, in one-letter code: uncharacterized protein (110 aa).

Positions 38 to 62 (SVQQNARAEEAEAAAPPAEEDSLPD) are disordered.

This is an uncharacterized protein from Mus musculus (Mouse).